Consider the following 312-residue polypeptide: 4-diphosphocytidyl-2-C-methyl-D-erythritol kinase (312 aa).

Lys16 is an active-site residue. Position 101–111 (101–111 (PIGAGLAGGSS)) interacts with ATP. Asp143 is an active-site residue.

It belongs to the GHMP kinase family. IspE subfamily.

The catalysed reaction is 4-CDP-2-C-methyl-D-erythritol + ATP = 4-CDP-2-C-methyl-D-erythritol 2-phosphate + ADP + H(+). Its pathway is isoprenoid biosynthesis; isopentenyl diphosphate biosynthesis via DXP pathway; isopentenyl diphosphate from 1-deoxy-D-xylulose 5-phosphate: step 3/6. Catalyzes the phosphorylation of the position 2 hydroxy group of 4-diphosphocytidyl-2C-methyl-D-erythritol. In Prochlorococcus marinus subsp. pastoris (strain CCMP1986 / NIES-2087 / MED4), this protein is 4-diphosphocytidyl-2-C-methyl-D-erythritol kinase.